Here is a 192-residue protein sequence, read N- to C-terminus: Dynein axonemal light chain 1 (192 aa).

4 LRR repeats span residues 49-70 (NCERLSLSTNCIEKIANLNGLK), 71-92 (NLKILSLGRNNIKNLNGLEAVG), 94-115 (TLEELWISYNLIEKLKGIHVMK), and 116-137 (KLKVLYMSNNLVKEWGEFLKLA). Residues 150 to 192 (NPLEEKYSADGNWIEEATKRLPKLKKLDGNPVIKQEEETEGES) form the LRRCT domain.

The protein belongs to the dynein light chain LC1-type family. In terms of assembly, interacts with DNAH5, a outer arm dynein heavy chain. Interacts with tubulin located within the A-tubule of the outer doublets in a ATP-independent manner.

Its subcellular location is the cytoplasm. The protein localises to the cytoskeleton. It is found in the cilium axoneme. Part of the multisubunit axonemal ATPase complexes that generate the force for cilia motility and govern beat frequency. Component of the outer arm dynein (ODA). May be involved in a mechanosensory feedback mechanism controlling ODA activity based on external conformational cues by tethering the outer arm dynein heavy chain (DNAH5) to the microtubule within the axoneme. This Danio rerio (Zebrafish) protein is Dynein axonemal light chain 1 (dnal1).